The chain runs to 491 residues: tRNA-2-methylthio-N(6)-dimethylallyladenosine synthase (491 aa).

The region spanning 54–172 (KTYHIKTFGC…ILNLLEQVIF (119 aa)) is the MTTase N-terminal domain. The [4Fe-4S] cluster site is built by cysteine 63, cysteine 99, cysteine 133, cysteine 209, cysteine 213, and cysteine 216. The Radical SAM core domain maps to 195 to 426 (RTNNLKGFVN…NEMVKTFSKK (232 aa)). The TRAM domain occupies 429-491 (EKYVNKVLDV…RFTLNGKMID (63 aa)).

The protein belongs to the methylthiotransferase family. MiaB subfamily. Monomer. [4Fe-4S] cluster serves as cofactor.

The protein resides in the cytoplasm. It catalyses the reaction N(6)-dimethylallyladenosine(37) in tRNA + (sulfur carrier)-SH + AH2 + 2 S-adenosyl-L-methionine = 2-methylsulfanyl-N(6)-dimethylallyladenosine(37) in tRNA + (sulfur carrier)-H + 5'-deoxyadenosine + L-methionine + A + S-adenosyl-L-homocysteine + 2 H(+). In terms of biological role, catalyzes the methylthiolation of N6-(dimethylallyl)adenosine (i(6)A), leading to the formation of 2-methylthio-N6-(dimethylallyl)adenosine (ms(2)i(6)A) at position 37 in tRNAs that read codons beginning with uridine. The chain is tRNA-2-methylthio-N(6)-dimethylallyladenosine synthase from Malacoplasma penetrans (strain HF-2) (Mycoplasma penetrans).